Here is a 352-residue protein sequence, read N- to C-terminus: Holliday junction branch migration complex subunit RuvB (352 aa).

Residues 1 to 181 (MTDRIVGAAK…FGIPVRLHFY (181 aa)) are large ATPase domain (RuvB-L). ATP-binding positions include L20, R21, G62, K65, T66, T67, 128–130 (EDF), R171, Y181, and R218. Residue T66 participates in Mg(2+) binding. Residues 182-252 (EVAELEGIVR…AADKALQRLE (71 aa)) are small ATPAse domain (RuvB-S). A head domain (RuvB-H) region spans residues 255–352 (ELGLDALDHR…FDGDEENGSA (98 aa)). Residues R291, R310, and R315 each coordinate DNA.

Belongs to the RuvB family. In terms of assembly, homohexamer. Forms an RuvA(8)-RuvB(12)-Holliday junction (HJ) complex. HJ DNA is sandwiched between 2 RuvA tetramers; dsDNA enters through RuvA and exits via RuvB. An RuvB hexamer assembles on each DNA strand where it exits the tetramer. Each RuvB hexamer is contacted by two RuvA subunits (via domain III) on 2 adjacent RuvB subunits; this complex drives branch migration. In the full resolvosome a probable DNA-RuvA(4)-RuvB(12)-RuvC(2) complex forms which resolves the HJ.

Its subcellular location is the cytoplasm. It carries out the reaction ATP + H2O = ADP + phosphate + H(+). Functionally, the RuvA-RuvB-RuvC complex processes Holliday junction (HJ) DNA during genetic recombination and DNA repair, while the RuvA-RuvB complex plays an important role in the rescue of blocked DNA replication forks via replication fork reversal (RFR). RuvA specifically binds to HJ cruciform DNA, conferring on it an open structure. The RuvB hexamer acts as an ATP-dependent pump, pulling dsDNA into and through the RuvAB complex. RuvB forms 2 homohexamers on either side of HJ DNA bound by 1 or 2 RuvA tetramers; 4 subunits per hexamer contact DNA at a time. Coordinated motions by a converter formed by DNA-disengaged RuvB subunits stimulates ATP hydrolysis and nucleotide exchange. Immobilization of the converter enables RuvB to convert the ATP-contained energy into a lever motion, pulling 2 nucleotides of DNA out of the RuvA tetramer per ATP hydrolyzed, thus driving DNA branch migration. The RuvB motors rotate together with the DNA substrate, which together with the progressing nucleotide cycle form the mechanistic basis for DNA recombination by continuous HJ branch migration. Branch migration allows RuvC to scan DNA until it finds its consensus sequence, where it cleaves and resolves cruciform DNA. The chain is Holliday junction branch migration complex subunit RuvB from Parvibaculum lavamentivorans (strain DS-1 / DSM 13023 / NCIMB 13966).